A 206-amino-acid polypeptide reads, in one-letter code: Triosephosphate isomerase (206 aa).

Catalysis depends on His-76, which acts as the Electrophile. The Proton acceptor role is filled by Glu-146.

It belongs to the triosephosphate isomerase family. As to quaternary structure, homodimer.

The catalysed reaction is D-glyceraldehyde 3-phosphate = dihydroxyacetone phosphate. It participates in carbohydrate biosynthesis; gluconeogenesis. It functions in the pathway carbohydrate degradation; glycolysis; D-glyceraldehyde 3-phosphate from glycerone phosphate: step 1/1. The protein is Triosephosphate isomerase (Tpi) of Aedes togoi (Mosquito).